The sequence spans 406 residues: Phosphopentomutase (406 aa).

Positions 10, 305, 310, 346, 347, and 358 each coordinate Mn(2+).

It belongs to the phosphopentomutase family. Mn(2+) serves as cofactor.

It is found in the cytoplasm. The catalysed reaction is 2-deoxy-alpha-D-ribose 1-phosphate = 2-deoxy-D-ribose 5-phosphate. It catalyses the reaction alpha-D-ribose 1-phosphate = D-ribose 5-phosphate. Its pathway is carbohydrate degradation; 2-deoxy-D-ribose 1-phosphate degradation; D-glyceraldehyde 3-phosphate and acetaldehyde from 2-deoxy-alpha-D-ribose 1-phosphate: step 1/2. Its function is as follows. Isomerase that catalyzes the conversion of deoxy-ribose 1-phosphate (dRib-1-P) and ribose 1-phosphate (Rib-1-P) to deoxy-ribose 5-phosphate (dRib-5-P) and ribose 5-phosphate (Rib-5-P), respectively. The chain is Phosphopentomutase from Aliivibrio fischeri (strain MJ11) (Vibrio fischeri).